Consider the following 467-residue polypeptide: Argininosuccinate lyase (467 aa).

Belongs to the lyase 1 family. Argininosuccinate lyase subfamily.

The protein localises to the cytoplasm. The catalysed reaction is 2-(N(omega)-L-arginino)succinate = fumarate + L-arginine. The protein operates within amino-acid biosynthesis; L-arginine biosynthesis; L-arginine from L-ornithine and carbamoyl phosphate: step 3/3. This chain is Argininosuccinate lyase, found in Rhizobium etli (strain CIAT 652).